We begin with the raw amino-acid sequence, 292 residues long: Ribosomal protein L11 methyltransferase (292 aa).

T144, G165, D187, and N229 together coordinate S-adenosyl-L-methionine.

It belongs to the methyltransferase superfamily. PrmA family.

It is found in the cytoplasm. It carries out the reaction L-lysyl-[protein] + 3 S-adenosyl-L-methionine = N(6),N(6),N(6)-trimethyl-L-lysyl-[protein] + 3 S-adenosyl-L-homocysteine + 3 H(+). In terms of biological role, methylates ribosomal protein L11. The protein is Ribosomal protein L11 methyltransferase of Ectopseudomonas mendocina (strain ymp) (Pseudomonas mendocina).